Reading from the N-terminus, the 491-residue chain is Allene oxide synthase 3 (491 aa).

Heme b contacts are provided by K104, H135, and K139. Residues N296 and K302 each contribute to the (13S)-hydroperoxy-(9Z,11E)-octadecadienoate site. N296 lines the (13S)-hydroperoxy-(9Z,11E,15Z)-octadecatrienoate pocket. Heme b is bound by residues K442 and C444.

This sequence belongs to the cytochrome P450 family. Requires heme b as cofactor. In terms of tissue distribution, expressed in roots. Not detected in aerial tissues, including cotyledons, leaves, stems and flower buds.

The catalysed reaction is (13S)-hydroperoxy-(9Z,11E,15Z)-octadecatrienoate = (9Z,13S,15Z)-12,13-epoxyoctadeca-9,11,15-trienoate + H2O. It carries out the reaction (13S)-hydroperoxy-(9Z,11E)-octadecadienoate = (9Z,13S)-12,13-epoxyoctadeca-9,11-dienoate + H2O. It catalyses the reaction (9Z,13S,15Z)-12,13-epoxyoctadeca-9,11,15-trienoate = (9S,13S,15Z)-12-oxophyto-10,15-dienoate. Its function is as follows. Cytochrome P450 metabolizing both 13- and 9-hydroperoxides of linoleic and linolenic acids, but with a marked preference for 9-hydroperoxy fatty acids. Catalyzes not only the synthesis of allene oxide, but also its hydrolysis and cyclization. The first step is the synthesis of (12Z)-9,10-epoxyoctadeca-10,12-dienoic acid (9,10-EOD) and the final products are (9R)-alpha-ketol and the racemic cis-10-oxo-11-phytoenoic acid. The cyclase activity possesses regiospecificity and (9Z)-12,13-epoxyoctadeca-9,11-dienoic acid (12,13-EOD) is significantly less efficient as a substrate for cyclopentenone production than 9,10-EOD. Has no hydroperoxide lyase activity. May play a defensive role against soil-borne pests that affect roots or juvenile tissues as they emerge from the germinating seed. This Solanum lycopersicum (Tomato) protein is Allene oxide synthase 3.